Reading from the N-terminus, the 88-residue chain is Putative regulatory protein PCC7424_3427 (88 aa).

The protein belongs to the RemA family.

The protein is Putative regulatory protein PCC7424_3427 of Gloeothece citriformis (strain PCC 7424) (Cyanothece sp. (strain PCC 7424)).